We begin with the raw amino-acid sequence, 412 residues long: MQTSILIKSSCRPQFQRRFHHRMQKQIQNIISILSSASVINSYDENDIRHSKPLLVQMDCNYNGYVAGIPNSLVTLSVCSGLRGTMQLKNISYGIEPMEAVSGFIHKIYEEKYADTNILLEENDTYTWFNSEYQVRKSSEKTDFIKLFPRYIEMHIVVDKNLFKPANMICRKSVGKECDFTEYCNGDLPYCLPDTYVRDGEYCDSGGAFCFQGKCRTFDKQCDDLIGRGSRGAPVFCYDEINTRGDNFGNCGTAHCLFQHILCGKLVCTWEHRDLISRPNLSVIYAHVRDQTCVSTYLPRRTPPPVNSPISITSYYSAEDRDETFVQDGSMCGPDMYCFEMHCKHVRFLMNLKLCDASNHCDRHGVCNNFNHCHCEKGYNPPYCQPKQGAFGSIDDGHLVPPTERSYMEEGR.

The region spanning Glu111–Asp199 is the Disintegrin domain. The 35-residue stretch at Asn351–Gln385 folds into the EGF-like domain.

Interacts with TEX101. As to expression, highly expressed in testis.

Its function is as follows. This is a non catalytic metalloprotease-like protein. This Homo sapiens (Human) protein is Putative disintegrin and metalloproteinase domain-containing protein 5 (ADAM5).